The primary structure comprises 90 residues: DNA-directed RNA polymerase subunit Rpo11 (90 aa).

This sequence belongs to the archaeal Rpo11/eukaryotic RPB11/RPC19 RNA polymerase subunit family. As to quaternary structure, part of the 13-subunit RNA polymerase complex.

The protein resides in the cytoplasm. The enzyme catalyses RNA(n) + a ribonucleoside 5'-triphosphate = RNA(n+1) + diphosphate. Its function is as follows. DNA-dependent RNA polymerase (RNAP) catalyzes the transcription of DNA into RNA using the four ribonucleoside triphosphates as substrates. The chain is DNA-directed RNA polymerase subunit Rpo11 from Sulfolobus acidocaldarius (strain ATCC 33909 / DSM 639 / JCM 8929 / NBRC 15157 / NCIMB 11770).